A 149-amino-acid chain; its full sequence is MALYEHVFLARQDITPQQVDALVEQYKGVLEANGGKVGRVENWGLKSLTYRIKKNRKAHYVLMDIDAPAPAVHEVERQMRINEDILRYMTIAVEKHEEGPSAMMQKRDRDDRPRRDGDRPDRGGFGDRGPRPDRGDRDDRPRRPREDRA.

The tract at residues glutamate 94 to alanine 149 is disordered.

Belongs to the bacterial ribosomal protein bS6 family.

Functionally, binds together with bS18 to 16S ribosomal RNA. This is Small ribosomal subunit protein bS6 from Sinorhizobium fredii (strain NBRC 101917 / NGR234).